Consider the following 362-residue polypeptide: tRNA/tmRNA (uracil-C(5))-methyltransferase (362 aa).

Positions 182, 210, 215, 231, and 293 each coordinate S-adenosyl-L-methionine. Residue Cys-318 is the Nucleophile of the active site. Glu-352 serves as the catalytic Proton acceptor.

This sequence belongs to the class I-like SAM-binding methyltransferase superfamily. RNA M5U methyltransferase family. TrmA subfamily.

The catalysed reaction is uridine(54) in tRNA + S-adenosyl-L-methionine = 5-methyluridine(54) in tRNA + S-adenosyl-L-homocysteine + H(+). It catalyses the reaction uridine(341) in tmRNA + S-adenosyl-L-methionine = 5-methyluridine(341) in tmRNA + S-adenosyl-L-homocysteine + H(+). Its function is as follows. Dual-specificity methyltransferase that catalyzes the formation of 5-methyluridine at position 54 (m5U54) in all tRNAs, and that of position 341 (m5U341) in tmRNA (transfer-mRNA). This Neisseria meningitidis serogroup B (strain ATCC BAA-335 / MC58) protein is tRNA/tmRNA (uracil-C(5))-methyltransferase.